We begin with the raw amino-acid sequence, 60 residues long: Cytotoxin 1 (60 aa).

4 cysteine pairs are disulfide-bonded: C3/C21, C14/C38, C42/C53, and C54/C59.

It belongs to the three-finger toxin family. Short-chain subfamily. Type IA cytotoxin sub-subfamily. As to quaternary structure, monomer in solution; Homodimer and oligomer in the presence of negatively charged lipids forming a pore with a size ranging between 20 and 30 Angstroms. As to expression, expressed by the venom gland.

It is found in the secreted. It localises to the target cell membrane. Its function is as follows. Shows cytolytic activity on many different cells by forming pore in lipid membranes. In vivo, increases heart rate or kills the animal by cardiac arrest. In addition, it binds to heparin with high affinity, interacts with Kv channel-interacting protein 1 (KCNIP1) in a calcium-independent manner, and binds to integrin alpha-V/beta-3 (ITGAV/ITGB3) with moderate affinity. The sequence is that of Cytotoxin 1 from Naja mossambica (Mozambique spitting cobra).